Reading from the N-terminus, the 432-residue chain is Glutamyl-tRNA reductase (432 aa).

Residues 55 to 58, serine 114, 119 to 121, and glutamine 125 contribute to the substrate site; these read TCNR and ETQ. Cysteine 56 functions as the Nucleophile in the catalytic mechanism. An NADP(+)-binding site is contributed by 194–199; the sequence is GAGEMI.

The protein belongs to the glutamyl-tRNA reductase family. As to quaternary structure, homodimer.

It catalyses the reaction (S)-4-amino-5-oxopentanoate + tRNA(Glu) + NADP(+) = L-glutamyl-tRNA(Glu) + NADPH + H(+). Its pathway is porphyrin-containing compound metabolism; protoporphyrin-IX biosynthesis; 5-aminolevulinate from L-glutamyl-tRNA(Glu): step 1/2. Catalyzes the NADPH-dependent reduction of glutamyl-tRNA(Glu) to glutamate 1-semialdehyde (GSA). The sequence is that of Glutamyl-tRNA reductase from Burkholderia ambifaria (strain ATCC BAA-244 / DSM 16087 / CCUG 44356 / LMG 19182 / AMMD) (Burkholderia cepacia (strain AMMD)).